Consider the following 229-residue polypeptide: Ribose-5-phosphate isomerase A (229 aa).

Substrate is bound by residues 28-31 (TGST), 85-88 (DGAD), and 98-101 (KGRG). Glu107 serves as the catalytic Proton acceptor. Lys125 provides a ligand contact to substrate.

The protein belongs to the ribose 5-phosphate isomerase family. As to quaternary structure, homodimer.

The catalysed reaction is aldehydo-D-ribose 5-phosphate = D-ribulose 5-phosphate. It functions in the pathway carbohydrate degradation; pentose phosphate pathway; D-ribose 5-phosphate from D-ribulose 5-phosphate (non-oxidative stage): step 1/1. Its function is as follows. Catalyzes the reversible conversion of ribose-5-phosphate to ribulose 5-phosphate. The protein is Ribose-5-phosphate isomerase A of Pyrococcus furiosus (strain ATCC 43587 / DSM 3638 / JCM 8422 / Vc1).